The primary structure comprises 819 residues: Putative U-box domain-containing protein 53 (819 aa).

Disordered stretches follow at residues 208 to 309 (TSDT…NPQF) and 398 to 433 (KETEKFEQKRREEREAAQRREAEMKATHEAKEKEKL). Residues 223-237 (ERTSSSCSSGSGANS) show a composition bias toward low complexity. Positions 238–260 (DVMSNALKSNPHTLSNKRMQNLP) are enriched in polar residues. Residues 278–296 (DETKKRSSDAAEEASKRSS) are compositionally biased toward basic and acidic residues. Polar residues predominate over residues 297-307 (PETSRSVSWNP). A coiled-coil region spans residues 395–437 (IAKKETEKFEQKRREEREAAQRREAEMKATHEAKEKEKLEESS). One can recognise a Protein kinase domain in the interval 460 to 728 (FSEDLKIGMG…DLEDQILPVL (269 aa)). ATP contacts are provided by residues 466–474 (IGMGAYGDV) and Lys-487. The Proton acceptor role is filled by Asp-582. Positions 748–819 (QPPSHFFCPL…AIVEWRNRNQ (72 aa)) constitute a U-box domain.

The protein belongs to the protein kinase superfamily. Ser/Thr protein kinase family.

It carries out the reaction L-seryl-[protein] + ATP = O-phospho-L-seryl-[protein] + ADP + H(+). The enzyme catalyses L-threonyl-[protein] + ATP = O-phospho-L-threonyl-[protein] + ADP + H(+). The catalysed reaction is S-ubiquitinyl-[E2 ubiquitin-conjugating enzyme]-L-cysteine + [acceptor protein]-L-lysine = [E2 ubiquitin-conjugating enzyme]-L-cysteine + N(6)-ubiquitinyl-[acceptor protein]-L-lysine.. The protein operates within protein modification; protein ubiquitination. Functionally, functions as an E3 ubiquitin ligase. The chain is Putative U-box domain-containing protein 53 (PUB53) from Arabidopsis thaliana (Mouse-ear cress).